Consider the following 20-residue polypeptide: Probable cinnamyl alcohol dehydrogenase 1 (20 aa).

This sequence belongs to the zinc-containing alcohol dehydrogenase family. Zn(2+) serves as cofactor.

The enzyme catalyses (E)-cinnamyl alcohol + NADP(+) = (E)-cinnamaldehyde + NADPH + H(+). It catalyses the reaction (E)-coniferol + NADP(+) = (E)-coniferaldehyde + NADPH + H(+). The catalysed reaction is (E)-sinapyl alcohol + NADP(+) = (E)-sinapaldehyde + NADPH + H(+). It carries out the reaction (E)-4-coumaroyl alcohol + NADP(+) = (E)-4-coumaraldehyde + NADPH + H(+). The enzyme catalyses (E)-caffeyl alcohol + NADP(+) = (E)-caffeyl aldehyde + NADPH + H(+). It functions in the pathway aromatic compound metabolism; phenylpropanoid biosynthesis. Involved in lignin biosynthesis. Catalyzes the final step specific for the production of lignin monomers, like coniferyl alcohol, sinapyl alcohol and 4-coumaryl alcohol. This Pseudotsuga menziesii (Douglas-fir) protein is Probable cinnamyl alcohol dehydrogenase 1.